The primary structure comprises 105 residues: Large ribosomal subunit protein uL23 (105 aa).

It belongs to the universal ribosomal protein uL23 family. As to quaternary structure, part of the 50S ribosomal subunit. Contacts protein L29, and trigger factor when it is bound to the ribosome.

In terms of biological role, one of the early assembly proteins it binds 23S rRNA. One of the proteins that surrounds the polypeptide exit tunnel on the outside of the ribosome. Forms the main docking site for trigger factor binding to the ribosome. The sequence is that of Large ribosomal subunit protein uL23 from Herminiimonas arsenicoxydans.